A 516-amino-acid chain; its full sequence is L-amino-acid oxidase (516 aa).

Residues 1–18 (MNVFFMFSLLFLAALGSC) form the signal peptide. Cysteine 28 and cysteine 191 are joined by a disulfide. FAD-binding positions include 61-62 (MA), 81-82 (EA), arginine 89, and 105-108 (GPMR). Arginine 108 is a binding site for substrate. Asparagine 190 carries N-linked (GlcNAc...) (complex) asparagine glycosylation. A substrate-binding site is contributed by histidine 241. Valine 279 contributes to the FAD binding site. Cysteine 349 and cysteine 430 form a disulfide bridge. Asparagine 379 carries an N-linked (GlcNAc...) (complex) asparagine glycan. Tyrosine 390 serves as a coordination point for substrate. FAD is bound by residues glutamate 475 and 482–487 (GWIDST). 482 to 483 (GW) serves as a coordination point for substrate.

Homodimer; non-covalently linked. Requires FAD as cofactor. N-glycosylated at Asn-190 and Asn-379 with bis-sialylated, biantennary, core-fucosylated dodecasaccharide (composed of N-acetylglucosamine, fucose, mannose, galactose, and sialic acid residues). In terms of tissue distribution, expressed by the venom gland.

Its subcellular location is the secreted. The catalysed reaction is an L-alpha-amino acid + O2 + H2O = a 2-oxocarboxylate + H2O2 + NH4(+). It catalyses the reaction L-leucine + O2 + H2O = 4-methyl-2-oxopentanoate + H2O2 + NH4(+). The enzyme catalyses L-phenylalanine + O2 + H2O = 3-phenylpyruvate + H2O2 + NH4(+). It carries out the reaction L-tryptophan + O2 + H2O = indole-3-pyruvate + H2O2 + NH4(+). The catalysed reaction is L-methionine + O2 + H2O = 4-methylsulfanyl-2-oxobutanoate + H2O2 + NH4(+). It catalyses the reaction L-isoleucine + O2 + H2O = (S)-3-methyl-2-oxopentanoate + H2O2 + NH4(+). The enzyme catalyses L-arginine + O2 + H2O = 5-guanidino-2-oxopentanoate + H2O2 + NH4(+). It carries out the reaction L-aspartate + O2 + H2O = oxaloacetate + H2O2 + NH4(+). The catalysed reaction is L-histidine + O2 + H2O = 3-(imidazol-5-yl)pyruvate + H2O2 + NH4(+). It catalyses the reaction L-2-aminohexanoate + O2 + H2O = 2-oxohexanoate + H2O2 + NH4(+). The enzyme catalyses L-2-aminopentanoate + O2 + H2O = 2-oxopentanoate + H2O2 + NH4(+). Its function is as follows. Catalyzes an oxidative deamination of predominantly hydrophobic and aromatic L-amino acids, thus producing hydrogen peroxide that may contribute to the diverse toxic effects of this enzyme. Shows high affinity for L-Phe, L-Trp, L-Met, L-Leu, and L-Ile, moderate affinity for L-Arg, L-Asp, and L-His, and very low affinity for L-Gln, L-Lys, and L-Ala. Also shows high activity on L-norleucine (L-2-aminohexanoate), and L-norvaline (L-2-aminopentanoate) and a weak activity on L-ornithine and L-aminobutyric acid. Also exhibits diverse biological activities, such as hemorrhage, hemolysis, edema, apoptosis of vascular endothelial cells or tumor cell lines, and antiparasitic activities, as well as regulation of platelet aggregation. Its effect on platelets is controversial, since it either induces aggregation or inhibits agonist-induced aggregation. These different effects are probably due to different experimental conditions. A possible explanation of high efficacy it that LAAO may bind to target cells through its sialylated glycan moiety that would bind to sialic acid-binding lectins (siglec) on target cells. This interaction may result in production of locally high concentrations of hydrogen peroxide in or near the binding interface, leading, in turn to oxidative damage of the siglec or another adjacent cell structural elements. In Calloselasma rhodostoma (Malayan pit viper), this protein is L-amino-acid oxidase.